The sequence spans 163 residues: 2-C-methyl-D-erythritol 2,4-cyclodiphosphate synthase (163 aa).

A divalent metal cation contacts are provided by aspartate 10 and histidine 12. Residues 10–12 (DVH) and 36–37 (HS) contribute to the 4-CDP-2-C-methyl-D-erythritol 2-phosphate site. Histidine 44 is a binding site for a divalent metal cation. Residues 58-60 (DIG), 63-67 (FPDND), 134-137 (TTTE), phenylalanine 141, and arginine 144 contribute to the 4-CDP-2-C-methyl-D-erythritol 2-phosphate site.

Belongs to the IspF family. Homotrimer. It depends on a divalent metal cation as a cofactor.

It catalyses the reaction 4-CDP-2-C-methyl-D-erythritol 2-phosphate = 2-C-methyl-D-erythritol 2,4-cyclic diphosphate + CMP. Its pathway is isoprenoid biosynthesis; isopentenyl diphosphate biosynthesis via DXP pathway; isopentenyl diphosphate from 1-deoxy-D-xylulose 5-phosphate: step 4/6. Its function is as follows. Involved in the biosynthesis of isopentenyl diphosphate (IPP) and dimethylallyl diphosphate (DMAPP), two major building blocks of isoprenoid compounds. Catalyzes the conversion of 4-diphosphocytidyl-2-C-methyl-D-erythritol 2-phosphate (CDP-ME2P) to 2-C-methyl-D-erythritol 2,4-cyclodiphosphate (ME-CPP) with a corresponding release of cytidine 5-monophosphate (CMP). The polypeptide is 2-C-methyl-D-erythritol 2,4-cyclodiphosphate synthase (Carboxydothermus hydrogenoformans (strain ATCC BAA-161 / DSM 6008 / Z-2901)).